The primary structure comprises 407 residues: Arginine biosynthesis bifunctional protein ArgJ (407 aa).

Substrate contacts are provided by Thr169, Lys192, Thr203, Glu283, Asn402, and Ser407. Thr203 functions as the Nucleophile in the catalytic mechanism.

This sequence belongs to the ArgJ family. In terms of assembly, heterotetramer of two alpha and two beta chains.

The protein localises to the cytoplasm. It catalyses the reaction N(2)-acetyl-L-ornithine + L-glutamate = N-acetyl-L-glutamate + L-ornithine. The enzyme catalyses L-glutamate + acetyl-CoA = N-acetyl-L-glutamate + CoA + H(+). It functions in the pathway amino-acid biosynthesis; L-arginine biosynthesis; L-ornithine and N-acetyl-L-glutamate from L-glutamate and N(2)-acetyl-L-ornithine (cyclic): step 1/1. Its pathway is amino-acid biosynthesis; L-arginine biosynthesis; N(2)-acetyl-L-ornithine from L-glutamate: step 1/4. Its function is as follows. Catalyzes two activities which are involved in the cyclic version of arginine biosynthesis: the synthesis of N-acetylglutamate from glutamate and acetyl-CoA as the acetyl donor, and of ornithine by transacetylation between N(2)-acetylornithine and glutamate. The polypeptide is Arginine biosynthesis bifunctional protein ArgJ (Mycobacterium leprae (strain TN)).